The sequence spans 494 residues: Tripartite motif-containing protein 5 (494 aa).

Alanine 2 bears the N-acetylalanine mark. The RING-type zinc-finger motif lies at 15–59 (CPICLELLTEPLSLDCGHSFCQACITANHKKSMLHQGERSCPLCR). Serine 86 carries the phosphoserine modification. A B box-type zinc finger spans residues 91-132 (QKVDHCARHGEKLLLFCQQDGNVICWLCERSQEHRGHHTLLV). Cysteine 96, histidine 99, cysteine 118, and histidine 124 together coordinate Zn(2+). The stretch at 132–222 (VEEVAQTYRE…KRLTQSENDM (91 aa)) forms a coiled coil. Residues 186 to 199 (FKQLRDILDCEESN) form a required for interaction with GABARAP and for autophagy region. The region spanning 280 to 494 (PDLKGMLQVF…LPMTLCSPRS (215 aa)) is the B30.2/SPRY domain.

Belongs to the TRIM/RBCC family. As to quaternary structure, can form homodimers and homotrimers. In addition to lower-order dimerization, also exhibits a higher-order multimerization and both low- and high-order multimerizations are essential for its restriction activity. Interacts with BTBD1 and BTBD2. Interacts with PSMC4, PSMC5, PSMD7 and HSPA8/HSC70. Interacts (via B30.2/SPRY domain) with HSPA1A/B. Interacts with PSMC2, MAP3K7/TAK1, TAB2 and TAB3. Interacts with SQSTM1. Interacts with TRIM6 and TRIM34. Interacts with ULK1 (phosphorylated form), GABARAP, GABARAPL1, GABARAPL2, MAP1LC3A, MAP1LC3C and BECN1. In terms of processing, degraded in a proteasome-independent fashion in the absence of viral infection but in a proteasome-dependent fashion following exposure to restriction sensitive virus. Post-translationally, autoubiquitinated in a RING finger- and UBE2D2-dependent manner. Monoubiquitinated by TRIM21. Deubiquitinated by Yersinia YopJ. Ubiquitination may not lead to proteasomal degradation.

Its subcellular location is the cytoplasm. The protein localises to the nucleus. It catalyses the reaction S-ubiquitinyl-[E2 ubiquitin-conjugating enzyme]-L-cysteine + [acceptor protein]-L-lysine = [E2 ubiquitin-conjugating enzyme]-L-cysteine + N(6)-ubiquitinyl-[acceptor protein]-L-lysine.. It functions in the pathway protein modification; protein ubiquitination. In terms of biological role, capsid-specific restriction factor that prevents infection from non-host-adapted retroviruses. Blocks viral replication early in the life cycle, after viral entry but before reverse transcription. In addition to acting as a capsid-specific restriction factor, also acts as a pattern recognition receptor that activates innate immune signaling in response to the retroviral capsid lattice. Binding to the viral capsid triggers its E3 ubiquitin ligase activity, and in concert with the heterodimeric ubiquitin conjugating enzyme complex UBE2V1-UBE2N (also known as UBC13-UEV1A complex) generates 'Lys-63'-linked polyubiquitin chains, which in turn are catalysts in the autophosphorylation of the MAP3K7/TAK1 complex (includes TAK1, TAB2, and TAB3). Activation of the MAP3K7/TAK1 complex by autophosphorylation results in the induction and expression of NF-kappa-B and MAPK-responsive inflammatory genes, thereby leading to an innate immune response in the infected cell. Plays a role in regulating autophagy through activation of autophagy regulator BECN1 by causing its dissociation from its inhibitors BCL2 and TAB2. This Pithecia pithecia (White-faced saki) protein is Tripartite motif-containing protein 5 (TRIM5).